The following is a 300-amino-acid chain: Cell surface glycoprotein CD200 receptor 1-A (300 aa).

An N-terminal signal peptide occupies residues 1–24 (MEIAGKAVCVFLLLAIIKLRRSEG). Positions 25–124 (INRVSANLGH…GNFHRLYHLT (100 aa)) constitute an Ig-like V-type domain. Residues 25-213 (INRVSANLGH…SINCSSSYRD (189 aa)) lie on the Extracellular side of the membrane. Disulfide bonds link Cys40–Cys108 and Cys143–Cys192. Asn45, Asn76, Asn105, Asn171, Asn200, and Asn206 each carry an N-linked (GlcNAc...) asparagine glycan. An Ig-like C2-type domain is found at 122 to 206 (HLTVIVAPRM…ATLNETKSIN (85 aa)). Residues 214 to 234 (LILCIAIILSFLIIITFMAVI) form a helical membrane-spanning segment. Over 235 to 300 (YYLKLHGCRF…NLPQGQSPAT (66 aa)) the chain is Cytoplasmic.

This sequence belongs to the CD200R family. Post-translationally, glycosylated. Phosphorylated. In terms of tissue distribution, highly expressed in macrophages, peripheral blood lymphocytes (PBL) and peripheral blood mononuclear cells (PBMC). Weakly expressed in bursa, thymus, spleen, liver and brain.

It is found in the membrane. Its subcellular location is the secreted. The protein is Cell surface glycoprotein CD200 receptor 1-A (CD200R1A) of Gallus gallus (Chicken).